The primary structure comprises 218 residues: Small ribosomal subunit protein uS3 (218 aa).

The region spanning 43–113 (IREHIERKLA…KVQVNVREVS (71 aa)) is the KH type-2 domain.

The protein belongs to the universal ribosomal protein uS3 family. Part of the 30S ribosomal subunit. Forms a tight complex with proteins S10 and S14.

Functionally, binds the lower part of the 30S subunit head. Binds mRNA in the 70S ribosome, positioning it for translation. This Rubrobacter xylanophilus (strain DSM 9941 / JCM 11954 / NBRC 16129 / PRD-1) protein is Small ribosomal subunit protein uS3.